A 294-amino-acid polypeptide reads, in one-letter code: Ribosomal RNA small subunit methyltransferase A (294 aa).

Positions 31, 33, 58, 79, 111, and 136 each coordinate S-adenosyl-L-methionine.

It belongs to the class I-like SAM-binding methyltransferase superfamily. rRNA adenine N(6)-methyltransferase family. RsmA subfamily.

Its subcellular location is the cytoplasm. It carries out the reaction adenosine(1518)/adenosine(1519) in 16S rRNA + 4 S-adenosyl-L-methionine = N(6)-dimethyladenosine(1518)/N(6)-dimethyladenosine(1519) in 16S rRNA + 4 S-adenosyl-L-homocysteine + 4 H(+). In terms of biological role, specifically dimethylates two adjacent adenosines (A1518 and A1519) in the loop of a conserved hairpin near the 3'-end of 16S rRNA in the 30S particle. May play a critical role in biogenesis of 30S subunits. This Lactobacillus helveticus (strain DPC 4571) protein is Ribosomal RNA small subunit methyltransferase A.